An 885-amino-acid polypeptide reads, in one-letter code: Rho GTPase-activating protein gacFF (885 aa).

Positions 168 to 182 are enriched in low complexity; that stretch reads TTTNNSNNSNSNNNN. The interval 168 to 187 is disordered; that stretch reads TTTNNSNNSNSNNNNKQYNS. Residues 222–249 adopt a coiled-coil conformation; that stretch reads LINKIQNDSEQLKLVLSQVEQQIEFLKS. Positions 348-394 constitute an F-box domain; the sequence is SDIFSLLPTHLTLYVFSYLEPKELLILAQVSSQWQKLAGDNLLWVRF. The PH domain maps to 464-571; it reads SSSKEGWLYK…WMILLNSIIK (108 aa). Composition is skewed to low complexity over residues 594-622 and 629-648; these read NNVY…NNNN and LPPL…SSTG. Residues 594–680 are disordered; it reads NNVYINNNNN…GGGSGGNNNF (87 aa). Residues 701-885 enclose the Rho-GAP domain; that stretch reads VALSKILENQ…KYYDEIFIKK (185 aa).

The protein resides in the cytoplasm. In terms of biological role, rho GTPase-activating protein involved in the signal transduction pathway. The polypeptide is Rho GTPase-activating protein gacFF (gacFF) (Dictyostelium discoideum (Social amoeba)).